The chain runs to 82 residues: Small ribosomal subunit protein bS16 (82 aa).

It belongs to the bacterial ribosomal protein bS16 family.

The sequence is that of Small ribosomal subunit protein bS16 from Pectobacterium carotovorum subsp. carotovorum (strain PC1).